Reading from the N-terminus, the 147-residue chain is Phosphoribosyl-AMP cyclohydrolase (147 aa).

Aspartate 89 is a binding site for Mg(2+). A Zn(2+)-binding site is contributed by cysteine 90. 2 residues coordinate Mg(2+): aspartate 91 and aspartate 93. Residues cysteine 106 and cysteine 113 each coordinate Zn(2+).

The protein belongs to the PRA-CH family. In terms of assembly, homodimer. Mg(2+) serves as cofactor. The cofactor is Zn(2+).

It is found in the cytoplasm. It carries out the reaction 1-(5-phospho-beta-D-ribosyl)-5'-AMP + H2O = 1-(5-phospho-beta-D-ribosyl)-5-[(5-phospho-beta-D-ribosylamino)methylideneamino]imidazole-4-carboxamide. It functions in the pathway amino-acid biosynthesis; L-histidine biosynthesis; L-histidine from 5-phospho-alpha-D-ribose 1-diphosphate: step 3/9. Functionally, catalyzes the hydrolysis of the adenine ring of phosphoribosyl-AMP. In Nitrobacter hamburgensis (strain DSM 10229 / NCIMB 13809 / X14), this protein is Phosphoribosyl-AMP cyclohydrolase.